The sequence spans 366 residues: Galactoside alpha-(1,2)-fucosyltransferase 1 (366 aa).

Topologically, residues 1 to 8 are cytoplasmic; the sequence is MWPLSHRH. Residues 9 to 25 form a helical; Signal-anchor for type II membrane protein membrane-spanning segment; the sequence is LCLAFLLVCVLSAISFF. Topologically, residues 26–366 are lumenal; the sequence is LHVHQDSFRH…LSPLWTLAEP (341 aa). N-linked (GlcNAc...) asparagine glycosylation is found at Asn66, Asn302, and Asn328.

The protein belongs to the glycosyltransferase 11 family.

Its subcellular location is the golgi apparatus. It localises to the golgi stack membrane. The enzyme catalyses a beta-D-galactosyl-(1-&gt;4)-N-acetyl-beta-D-glucosaminyl derivative + GDP-beta-L-fucose = an alpha-L-Fuc-(1-&gt;2)-beta-D-Gal-(1-&gt;4)-beta-D-GlcNAc derivative + GDP + H(+). It carries out the reaction a ganglioside GA1 + GDP-beta-L-fucose = a ganglioside Fuc-GA1 + GDP + H(+). It catalyses the reaction a beta-D-Gal-(1-&gt;3)-beta-D-GlcNAc-(1-&gt;3)-beta-D-Gal-(1-&gt;4)-beta-D-Glc-(1&lt;-&gt;1')-Cer(d18:1(4E)) + GDP-beta-L-fucose = alpha-L-fucosyl-(1-&gt;2)- beta-D-galactosyl-(1-&gt;3)-N-acetyl-beta-D-glucosaminyl-(1-&gt;3)-beta-D-galactosyl-(1-&gt;4)-beta-D-glucosyl-(1&lt;-&gt;1')-N-acylsphing-4-enine + GDP + H(+). The catalysed reaction is a neolactoside nLc4Cer(d18:1(4E)) + GDP-beta-L-fucose = a neolactoside IV(2)-alpha-Fuc-nLc4Cer(d18:1(4E)) + GDP + H(+). The enzyme catalyses a ganglioside GM1 + GDP-beta-L-fucose = a ganglioside Fuc-GM1 + GDP + H(+). It carries out the reaction beta-D-galactosyl-(1-&gt;3)-N-acetyl-D-galactosamine + GDP-beta-L-fucose = alpha-L-fucosyl-(1-&gt;2)-beta-D-galactosyl-(1-&gt;3)-N-acetyl-D-galactosamine + GDP + H(+). It functions in the pathway protein modification; protein glycosylation. Functionally, catalyzes the transfer of L-fucose, from a guanosine diphosphate-beta-L-fucose, to the terminal galactose residue of glycoconjugates through an alpha(1,2) linkage leading to H antigen synthesis that is an intermediate substrate in the synthesis of ABO blood group antigens. H antigen is essential for maturation of the glomerular layer of the main olfactory bulb, in cell migration and early cell-cell contacts during tumor associated angiogenesis. Preferentially fucosylates soluble lactose and to a lesser extent fucosylates glycolipids gangliosides GA1 and GM1a. The chain is Galactoside alpha-(1,2)-fucosyltransferase 1 from Alouatta caraya (Black howler monkey).